The sequence spans 297 residues: 33 kDa chaperonin (297 aa).

Disulfide bonds link Cys234–Cys236 and Cys267–Cys270.

The protein belongs to the HSP33 family. In terms of processing, under oxidizing conditions two disulfide bonds are formed involving the reactive cysteines. Under reducing conditions zinc is bound to the reactive cysteines and the protein is inactive.

It localises to the cytoplasm. Its function is as follows. Redox regulated molecular chaperone. Protects both thermally unfolding and oxidatively damaged proteins from irreversible aggregation. Plays an important role in the bacterial defense system toward oxidative stress. In Pseudoalteromonas atlantica (strain T6c / ATCC BAA-1087), this protein is 33 kDa chaperonin.